The chain runs to 85 residues: Small ribosomal subunit protein bS20 (85 aa).

The protein belongs to the bacterial ribosomal protein bS20 family.

In terms of biological role, binds directly to 16S ribosomal RNA. This Borrelia garinii subsp. bavariensis (strain ATCC BAA-2496 / DSM 23469 / PBi) (Borreliella bavariensis) protein is Small ribosomal subunit protein bS20.